A 436-amino-acid polypeptide reads, in one-letter code: EPS I polysaccharide export inner membrane protein EpsE (436 aa).

12 helical membrane passes run Val20–Leu40, Phe49–Gly69, Leu91–Leu111, Ala133–Met153, Ala160–Ile180, Leu185–Leu205, Val234–Met254, Leu261–Leu281, Ala307–Gly327, Ala341–Leu361, Phe375–Leu395, and Gly396–Phe416.

It to E.coli bicyclomycin resistance protein (BCR).

The protein resides in the cell inner membrane. Its function is as follows. Probably involved in polymerization and/or export of exopolysaccharide EPS I which functions as a virulence factor. May play a role in export of EPS I or its intermediates across the membranes. The polypeptide is EPS I polysaccharide export inner membrane protein EpsE (epsE) (Ralstonia solanacearum (Pseudomonas solanacearum)).